A 405-amino-acid chain; its full sequence is 4-hydroxy-3-methylbut-2-en-1-yl diphosphate synthase (ferredoxin) (405 aa).

[4Fe-4S] cluster is bound by residues cysteine 314, cysteine 317, cysteine 348, and glutamate 355.

The protein belongs to the IspG family. It depends on [4Fe-4S] cluster as a cofactor.

The enzyme catalyses (2E)-4-hydroxy-3-methylbut-2-enyl diphosphate + 2 oxidized [2Fe-2S]-[ferredoxin] + H2O = 2-C-methyl-D-erythritol 2,4-cyclic diphosphate + 2 reduced [2Fe-2S]-[ferredoxin] + H(+). Its pathway is isoprenoid biosynthesis; isopentenyl diphosphate biosynthesis via DXP pathway; isopentenyl diphosphate from 1-deoxy-D-xylulose 5-phosphate: step 5/6. In terms of biological role, converts 2C-methyl-D-erythritol 2,4-cyclodiphosphate (ME-2,4cPP) into 1-hydroxy-2-methyl-2-(E)-butenyl 4-diphosphate. The sequence is that of 4-hydroxy-3-methylbut-2-en-1-yl diphosphate synthase (ferredoxin) from Prochlorococcus marinus subsp. pastoris (strain CCMP1986 / NIES-2087 / MED4).